A 427-amino-acid chain; its full sequence is Serine--tRNA ligase (427 aa).

Residue 231 to 233 (TAE) coordinates L-serine. Residue 262–264 (RSE) coordinates ATP. L-serine is bound at residue E285. 349 to 352 (EISS) contacts ATP. S385 lines the L-serine pocket.

The protein belongs to the class-II aminoacyl-tRNA synthetase family. Type-1 seryl-tRNA synthetase subfamily. As to quaternary structure, homodimer. The tRNA molecule binds across the dimer.

The protein localises to the cytoplasm. The enzyme catalyses tRNA(Ser) + L-serine + ATP = L-seryl-tRNA(Ser) + AMP + diphosphate + H(+). It catalyses the reaction tRNA(Sec) + L-serine + ATP = L-seryl-tRNA(Sec) + AMP + diphosphate + H(+). It participates in aminoacyl-tRNA biosynthesis; selenocysteinyl-tRNA(Sec) biosynthesis; L-seryl-tRNA(Sec) from L-serine and tRNA(Sec): step 1/1. Catalyzes the attachment of serine to tRNA(Ser). Is also able to aminoacylate tRNA(Sec) with serine, to form the misacylated tRNA L-seryl-tRNA(Sec), which will be further converted into selenocysteinyl-tRNA(Sec). This is Serine--tRNA ligase from Brucella melitensis biotype 2 (strain ATCC 23457).